A 766-amino-acid polypeptide reads, in one-letter code: Disabled homolog 2 (766 aa).

The segment covering 1–16 has biased composition (polar residues); sequence MSNEVETSTTNGQPDQ. Positions 1 to 36 are disordered; that stretch reads MSNEVETSTTNGQPDQQAAPKAPSKKEKKKGSEKTD. Ser-2 carries the post-translational modification N-acetylserine. Ser-2 is subject to Phosphoserine. Positions 45–196 constitute a PID domain; that stretch reads GDGVKYKAKL…KAEENGSEAL (152 aa). Tyr-170 bears the Phosphotyrosine mark. Ser-193 bears the Phosphoserine mark. The required for localization to clathrin-coated pits stretch occupies residues 230 to 447; it reads ESKDILLVDL…KPGRGRRTAK (218 aa). Disordered stretches follow at residues 284–482, 596–630, 659–683, and 699–766; these read LNFF…NFLD, PPPT…LKDI, RQPP…FSSY, and DFDA…NPFA. 2 consecutive short sequence motifs (DPF) follow at residues 293–295 and 298–300; these read DPF. 2 stretches are compositionally biased toward polar residues: residues 303–334 and 367–381; these read PDQS…QSKG and PSSQ…QNGV. Ser-323 is modified (phosphoserine). Residues Ser-326 and Ser-328 each carry the phosphoserine; in mitosis modification. Ser-401 is modified (phosphoserine). Positions 467–480 are enriched in polar residues; the sequence is MSPTGQPAVPQSNF. Over residues 600–612 the composition is skewed to low complexity; the sequence is MSTQSSPQPMMSS. Residues 600-730 form a sufficient for interaction with GRB2 region; it reads MSTQSSPQPM…VLLGTKSADN (131 aa). The required for interaction with CSK stretch occupies residues 617–625; it reads PPQPPPRNG. A required for interaction with MYO6 region spans residues 647–766; that stretch reads KEVKEMFKDF…HRSPFGNPFA (120 aa). Positions 661–669 are required for interaction with GRB2 and CSK; that stretch reads PPLVPSRKG. Phosphothreonine is present on Thr-671. Residues 673–683 are compositionally biased toward polar residues; it reads PSGTSSAFSSY. Residues 707–723 form a sufficient for interaction with SH3KBP1 SH3 domain region; sequence NKINEPPKPAPRQGVLL. Phosphoserine occurs at positions 727 and 759. Residues 727–753 are compositionally biased toward polar residues; the sequence is SADNSLENPFSKGFSSSNPSVVSQPAS.

Interacts (via NPXY motif) with DAB2 (via PID domain). Can interact (via PID domain) with LDLR, APP, APLP1 and APLP2, and weakly with INPP5D (via NPXY motifs); the interaction is impaired by tyrosine phosphorylation of the respective NPXY motifs. Can weakly interact (via PID domain) with LRP1 (via NPXY motif); the interaction is enhanced by tyrosine phosphorylation of the NPXY motif. Interacts with LRP2 (via NPXY motif); the interaction is not affected by tyrosine phosphorylation of the NPXY motif. Interacts with clathrin; in vitro can assemble clathrin triskelia into polyhedral coats. Interacts with AP2A2, ITGB1, ITGB3, ITGB5, PIAS2, DAB2IP, NOSTRIN, FCHO1, DVL3 and EPS15L1. Interacts with SH3KBP1 (via SH3 domains). Interacts with GRB2; competes with SOS1 for binding to GRB2 and the interaction is enhanced by EGF and NT-3 stimulation. Isoform p96 interacts with EPS15 and ITSN1; isoform p67 does not interact with EPS15 and only weakly interacts with ITSN1. Interacts with MAP3K7; the interaction is induced by TGF-beta stimulation and may mediate TGF-beta stimulated JNK activation. Interacts with AXIN1 and PPP1CA; the interactions are mutually exclusive. Interacts with the globular tail of MYO6. Interacts (via DPF motifs) with FCHO2; the interaction is direct and required for DAB2-mediated LDLR endocytosis. Interacts with LRP6; the interaction involves LRP6 phosphorylation by CK2 and sequesters LRP6 towards clathrin-mediated endocytosis. Associates with the TGF-beta receptor complex. Interacts with SMAD2 and SMAD3; the interactions are enhanced upon TGF-beta stimulation. Interacts with GRB2; the interaction is enhanced by EGF and NT-3 stimulation. Interacts with SRC; the interaction is enhanced by EGF stimulation. Phosphorylated on serine residues in response to mitogenic growth-factor stimulation. Phosphorylation during mitosis is leading to membrane displacement. As to expression, isoform p96 and isoform p67 are expressed in adult kidney and fibroblasts with isoform p96 being the predominant form. Isoform p67 is the predominant isoform expressed in embryonic visceral endoderm.

It is found in the cytoplasmic vesicle. Its subcellular location is the clathrin-coated vesicle membrane. It localises to the membrane. The protein localises to the clathrin-coated pit. The protein resides in the cytoplasm. It is found in the nucleus. In terms of biological role, adapter protein that functions as a clathrin-associated sorting protein (CLASP) required for clathrin-mediated endocytosis of selected cargo proteins. Can bind and assemble clathrin, and binds simultaneously to phosphatidylinositol 4,5-bisphosphate (PtdIns(4,5)P2) and cargos containing non-phosphorylated NPXY internalization motifs, such as the LDL receptor, to recruit them to clathrin-coated pits. Can function in clathrin-mediated endocytosis independently of the AP-2 complex. Involved in endocytosis of integrin beta-1; this function seems to redundant with the AP-2 complex and seems to require DAB2 binding to endocytosis accessory EH domain-containing proteins such as EPS15, EPS15L1 and ITSN1. Involved in endocytosis of cystic fibrosis transmembrane conductance regulator/CFTR. Isoform p96 is involved in endocytosis of megalin/LRP2 lipoprotein receptor during embryonal development. Required for recycling of the TGF-beta receptor. Isoform p67 is not involved in LDL receptor endocytosis. Involved in CFTR trafficking to the late endosome. Involved in several receptor-mediated signaling pathways. Involved in TGF-beta receptor signaling and facilitates phosphorylation of the signal transducer SMAD2. Mediates TFG-beta-stimulated JNK activation. May inhibit the canoniocal Wnt/beta-catenin signaling pathway by stabilizing the beta-catenin destruction complex through a competing association with axin preventing its dephosphorylation through protein phosphatase 1 (PP1). Sequesters LRP6 towards clathrin-mediated endocytosis, leading to inhibition of Wnt/beta-catenin signaling. May activate non-canonical Wnt signaling. In cell surface growth factor/Ras signaling pathways proposed to inhibit ERK activation by interrupting the binding of GRB2 to SOS1 and to inhibit SRC by preventing its activating phosphorylation at 'Tyr-419'. Proposed to be involved in modulation of androgen receptor (AR) signaling mediated by SRC activation; seems to compete with AR for interaction with SRC. Plays a role in the CSF-1 signal transduction pathway. Plays a role in cellular differentiation. Involved in cell positioning and formation of visceral endoderm (VE) during embryogenesis and proposed to be required in the VE to respond to Nodal signaling coming from the epiblast. Required for the epithelial to mesenchymal transition, a process necessary for proper embryonic development. May be involved in myeloid cell differentiation and can induce macrophage adhesion and spreading. Isoform p67 may be involved in transcriptional regulation. May act as a tumor suppressor. This chain is Disabled homolog 2 (Dab2), found in Mus musculus (Mouse).